We begin with the raw amino-acid sequence, 224 residues long: Propanediol dehydratase medium subunit (224 aa).

Positions 1 to 18 (MEINEKLLRQIIEDVLSE) are targets protein to the BMC.

This sequence belongs to the diol/glycerol dehydratase medium subunit family. The propanediol dehydratase enzyme is a heterotrimeric complex composed of a large (PduC), a medium (PduD) and a small (PduE) subunit. Requires adenosylcob(III)alamin as cofactor.

It localises to the bacterial microcompartment. The catalysed reaction is propane-1,2-diol = propanal + H2O. The protein operates within polyol metabolism; 1,2-propanediol degradation. Its function is as follows. Part of the PduCDE complex that catalyzes the dehydration of 1,2-propanediol (1,2-PD) to propionaldehyde. This subunit is directly targeted to the bacterial microcompartment (BMC). Functionally, expression of a cosmid containing the full 21-gene pdu operon in E.coli allows E.coli to grow on 1,2-propanediol (1,2-PD) with the appearance of BMCs in its cytoplasm. In terms of biological role, the 1,2-PD-specific bacterial microcompartment (BMC) concentrates low levels of 1,2-PD catabolic enzymes, concentrates volatile reaction intermediates thus enhancing pathway flux and keeps the level of toxic, mutagenic propionaldehyde low. This Citrobacter freundii protein is Propanediol dehydratase medium subunit.